Consider the following 93-residue polypeptide: M-zodatoxin-Lt5a (93 aa).

An N-terminal signal peptide occupies residues 1 to 22; that stretch reads MKYCVVILALLVALVCITESRS. Residues 23–64 constitute a propeptide that is removed on maturation; that stretch reads TETGYAVAETLEDNDLDELQAYLEEIAEASEMEDFSNIEEAR. Residues 61–64 carry the Processing quadruplet motif motif; that stretch reads EEAR. Leucine amide is present on Leu-92.

Cleavage of the propeptide depends on the processing quadruplet motif (XXXR, with at least one of X being E). Expressed by the venom gland.

The protein resides in the secreted. Has antimicrobial activity against. Gram-positive bacteria (A.globiformis VKM Ac-1112 (MIC=1.1 uM), and B.subtilis VKM B-501 (MIC=0.6 uM)), Gram-negative bacteria (E.coli DH5-alpha (MIC=0.6 uM), E.coli MH1 (MIC=0.6 uM), and P.aeruginosa PAO1 (MIC=18 uM)), and yeasts (P.pastoris GS115 (MIC&gt;37 uM), and S.cerevisiae Y190 (MIC&gt;37 uM)). Also has a moderate hemolytic activity against rabbit erythrocytes. Causes paralysis, but is not lethal when injected into insect (M.domestica) larvae. This is M-zodatoxin-Lt5a from Lachesana tarabaevi (Spider).